The following is a 141-amino-acid chain: MSIERLLKAQQEETRDIVQSLLDDGSDPDAEYMIEHHFSSTNFDRLEKAAVDAFKLGFEVTDAEELELDDGSVILCFDAIANHALDVDLIDKACEQLINLAAKQKVDYDGWGTYFMGDDEDFDDEDDDEDYDKDGFPIERH.

Over residues 119-132 (DEDFDDEDDDEDYD) the composition is skewed to acidic residues. Residues 119–141 (DEDFDDEDDDEDYDKDGFPIERH) form a disordered region.

The protein belongs to the RraB family. As to quaternary structure, interacts with the C-terminal region of Rne.

It localises to the cytoplasm. Globally modulates RNA abundance by binding to RNase E (Rne) and regulating its endonucleolytic activity. Can modulate Rne action in a substrate-dependent manner by altering the composition of the degradosome. This Shewanella amazonensis (strain ATCC BAA-1098 / SB2B) protein is Regulator of ribonuclease activity B.